Consider the following 420-residue polypeptide: Glucose-1-phosphate adenylyltransferase (420 aa).

Residues Y107, G173, 188-189 (EK), and S206 each bind alpha-D-glucose 1-phosphate.

The protein belongs to the bacterial/plant glucose-1-phosphate adenylyltransferase family. In terms of assembly, homotetramer.

It carries out the reaction alpha-D-glucose 1-phosphate + ATP + H(+) = ADP-alpha-D-glucose + diphosphate. It participates in glycan biosynthesis; glycogen biosynthesis. In terms of biological role, involved in the biosynthesis of ADP-glucose, a building block required for the elongation reactions to produce glycogen. Catalyzes the reaction between ATP and alpha-D-glucose 1-phosphate (G1P) to produce pyrophosphate and ADP-Glc. The protein is Glucose-1-phosphate adenylyltransferase of Shewanella sp. (strain ANA-3).